Reading from the N-terminus, the 451-residue chain is Bifunctional protein GlmU (451 aa).

Residues 1–225 form a pyrophosphorylase region; that stretch reads MVVVAILAAG…YQEILGINDR (225 aa). Residues 7–10, Lys21, Gln72, and 77–78 each bind UDP-N-acetyl-alpha-D-glucosamine; these read LAAG and GT. Asp102 serves as a coordination point for Mg(2+). 4 residues coordinate UDP-N-acetyl-alpha-D-glucosamine: Gly139, Glu154, Asn169, and Asn223. Mg(2+) is bound at residue Asn223. The interval 226 to 246 is linker; sequence LQLATAYEILQRRVKEQWMMA. The tract at residues 247-451 is N-acetyltransferase; sequence GVTLIDPNSI…PGWRKKSGES (205 aa). UDP-N-acetyl-alpha-D-glucosamine contacts are provided by Arg328 and Lys346. The active-site Proton acceptor is the His358. The UDP-N-acetyl-alpha-D-glucosamine site is built by Tyr361 and Asn372. Acetyl-CoA-binding positions include Ala375, 381-382, Ser400, Ala418, and Arg435; that span reads NY.

In the N-terminal section; belongs to the N-acetylglucosamine-1-phosphate uridyltransferase family. This sequence in the C-terminal section; belongs to the transferase hexapeptide repeat family. Homotrimer. Mg(2+) is required as a cofactor.

It localises to the cytoplasm. It carries out the reaction alpha-D-glucosamine 1-phosphate + acetyl-CoA = N-acetyl-alpha-D-glucosamine 1-phosphate + CoA + H(+). It catalyses the reaction N-acetyl-alpha-D-glucosamine 1-phosphate + UTP + H(+) = UDP-N-acetyl-alpha-D-glucosamine + diphosphate. It functions in the pathway nucleotide-sugar biosynthesis; UDP-N-acetyl-alpha-D-glucosamine biosynthesis; N-acetyl-alpha-D-glucosamine 1-phosphate from alpha-D-glucosamine 6-phosphate (route II): step 2/2. Its pathway is nucleotide-sugar biosynthesis; UDP-N-acetyl-alpha-D-glucosamine biosynthesis; UDP-N-acetyl-alpha-D-glucosamine from N-acetyl-alpha-D-glucosamine 1-phosphate: step 1/1. The protein operates within bacterial outer membrane biogenesis; LPS lipid A biosynthesis. In terms of biological role, catalyzes the last two sequential reactions in the de novo biosynthetic pathway for UDP-N-acetylglucosamine (UDP-GlcNAc). The C-terminal domain catalyzes the transfer of acetyl group from acetyl coenzyme A to glucosamine-1-phosphate (GlcN-1-P) to produce N-acetylglucosamine-1-phosphate (GlcNAc-1-P), which is converted into UDP-GlcNAc by the transfer of uridine 5-monophosphate (from uridine 5-triphosphate), a reaction catalyzed by the N-terminal domain. This Trichormus variabilis (strain ATCC 29413 / PCC 7937) (Anabaena variabilis) protein is Bifunctional protein GlmU.